Here is a 346-residue protein sequence, read N- to C-terminus: UPF0425 pyridoxal phosphate-dependent protein MK0620 (346 aa).

The residue at position 206 (lysine 206) is an N6-(pyridoxal phosphate)lysine.

It depends on pyridoxal 5'-phosphate as a cofactor.

This is UPF0425 pyridoxal phosphate-dependent protein MK0620 from Methanopyrus kandleri (strain AV19 / DSM 6324 / JCM 9639 / NBRC 100938).